A 137-amino-acid polypeptide reads, in one-letter code: MLAPKRVKFRKRQRGRLKGKDERGSYVAFGEFGLKAISSGRITARQIEAARITINRQVKRGGKLWIRIFPHLPITKKPAETRMGKGKGNPEFWIAEIRPGRVLFEMAGVDEETARKALHLAAFKLPVETSFVKRNVL.

This sequence belongs to the universal ribosomal protein uL16 family. As to quaternary structure, part of the 50S ribosomal subunit.

Functionally, binds 23S rRNA and is also seen to make contacts with the A and possibly P site tRNAs. This is Large ribosomal subunit protein uL16 from Leptospira biflexa serovar Patoc (strain Patoc 1 / Ames).